A 228-amino-acid chain; its full sequence is Translation initiation factor 6 (228 aa).

The protein belongs to the eIF-6 family.

Binds to the 50S ribosomal subunit and prevents its association with the 30S ribosomal subunit to form the 70S initiation complex. The protein is Translation initiation factor 6 of Thermococcus gammatolerans (strain DSM 15229 / JCM 11827 / EJ3).